Here is a 340-residue protein sequence, read N- to C-terminus: ATPase GET3 (340 aa).

35-42 (KGGVGKTT) is an ATP binding site. Residue D64 is part of the active site. The ATP site is built by E245 and N272. Zn(2+) is bound by residues C283 and C286.

The protein belongs to the arsA ATPase family. Homodimer.

Its subcellular location is the cytoplasm. It localises to the endoplasmic reticulum. Functionally, ATPase required for the post-translational delivery of tail-anchored (TA) proteins to the endoplasmic reticulum. Recognizes and selectively binds the transmembrane domain of TA proteins in the cytosol. This complex then targets to the endoplasmic reticulum by membrane-bound receptors, where the tail-anchored protein is released for insertion. This process is regulated by ATP binding and hydrolysis. ATP binding drives the homodimer towards the closed dimer state, facilitating recognition of newly synthesized TA membrane proteins. ATP hydrolysis is required for insertion. Subsequently, the homodimer reverts towards the open dimer state, lowering its affinity for the membrane-bound receptor, and returning it to the cytosol to initiate a new round of targeting. This chain is ATPase GET3, found in Chaetomium globosum (strain ATCC 6205 / CBS 148.51 / DSM 1962 / NBRC 6347 / NRRL 1970) (Soil fungus).